Reading from the N-terminus, the 400-residue chain is Phosphoglycerate kinase (400 aa).

Substrate contacts are provided by residues 24 to 26, Arg40, 63 to 66, Arg121, and Arg154; these read DFN and HFGR. Residues Lys205, Gly296, Glu327, and 356–359 contribute to the ATP site; that span reads GGDS.

This sequence belongs to the phosphoglycerate kinase family. As to quaternary structure, monomer.

The protein localises to the cytoplasm. It carries out the reaction (2R)-3-phosphoglycerate + ATP = (2R)-3-phospho-glyceroyl phosphate + ADP. Its pathway is carbohydrate degradation; glycolysis; pyruvate from D-glyceraldehyde 3-phosphate: step 2/5. This chain is Phosphoglycerate kinase, found in Thermosynechococcus vestitus (strain NIES-2133 / IAM M-273 / BP-1).